Reading from the N-terminus, the 154-residue chain is 6,7-dimethyl-8-ribityllumazine synthase (154 aa).

Residues phenylalanine 22, alanine 56–glutamate 58, and alanine 80–isoleucine 82 contribute to the 5-amino-6-(D-ribitylamino)uracil site. Alanine 85 to threonine 86 is a binding site for (2S)-2-hydroxy-3-oxobutyl phosphate. Histidine 88 acts as the Proton donor in catalysis. 5-amino-6-(D-ribitylamino)uracil is bound at residue phenylalanine 113. Arginine 127 serves as a coordination point for (2S)-2-hydroxy-3-oxobutyl phosphate.

Belongs to the DMRL synthase family.

It carries out the reaction (2S)-2-hydroxy-3-oxobutyl phosphate + 5-amino-6-(D-ribitylamino)uracil = 6,7-dimethyl-8-(1-D-ribityl)lumazine + phosphate + 2 H2O + H(+). It functions in the pathway cofactor biosynthesis; riboflavin biosynthesis; riboflavin from 2-hydroxy-3-oxobutyl phosphate and 5-amino-6-(D-ribitylamino)uracil: step 1/2. In terms of biological role, catalyzes the formation of 6,7-dimethyl-8-ribityllumazine by condensation of 5-amino-6-(D-ribitylamino)uracil with 3,4-dihydroxy-2-butanone 4-phosphate. This is the penultimate step in the biosynthesis of riboflavin. The protein is 6,7-dimethyl-8-ribityllumazine synthase of Clostridium botulinum (strain Okra / Type B1).